The following is an 88-amino-acid chain: Otospiralin (88 aa).

Positions 1–21 are cleaved as a signal peptide; it reads MQACMVPGLALCLLLGSLTEA.

It belongs to the otospiralin family. In terms of tissue distribution, ear specific.

Its subcellular location is the secreted. Functionally, may be essential for the survival of the neurosensory epithelium of the inner ear. The sequence is that of Otospiralin (OTOS) from Cavia porcellus (Guinea pig).